Consider the following 130-residue polypeptide: Small ribosomal subunit protein uS9 (130 aa).

The protein belongs to the universal ribosomal protein uS9 family.

The chain is Small ribosomal subunit protein uS9 from Janthinobacterium sp. (strain Marseille) (Minibacterium massiliensis).